The chain runs to 457 residues: MSAENGSPGLPNGGVCCATDSGRCSLVGNKVTVVLGAQWGDEGKGKVVDLLAQDADIVCRCQGGNNAGHTVVVDSVEYDFHLLPSGIINQNAIAFIGNGVVIHLPGLFEEAEKNLKKGQGLVGWEKRLCISDRAHIVFDFHQAADGIQEQQRQEQAGKNLGTTKKGIGPVYSSKAARSGLRMCDLVSDFSEFSQRFKLLAKQYKSMYPSLEIDIDGELKKLQDYADRVKPMVKDGVYYLYEALHGPPKNILVEGANAALLDIDFGTYPFVTSSNCTVGGVCTGLGIPPQSVGDVYGVVKAYTTRVGIGAFPTEQNNDTGEMLQTRGHEYGVTTGRKRRCGWLDLVLLRYAHMINGFTALALTKLDILDVLSEIKVGVSYKIDGKKIPHFPANQEVLNRVEVEYETLPGWNTDTCNVRTFEELPENAKKYVRYIELELGIPIKWIGVGKSRESMIQLF.

GTP is bound by residues glycine 40–lysine 46 and glycine 68–threonine 70. Residue aspartate 41 is the Proton acceptor of the active site. 2 residues coordinate Mg(2+): aspartate 41 and glycine 68. Aspartate 41 serves as a coordination point for substrate. IMP-binding positions include aspartate 41–lysine 44, asparagine 66–histidine 69, threonine 163, arginine 177, asparagine 256, threonine 271, and arginine 335. Histidine 69 functions as the Proton donor in the catalytic mechanism. A substrate-binding site is contributed by valine 331–arginine 337. Residues arginine 337, lysine 363–aspartate 365, and glycine 445–lysine 448 contribute to the GTP site.

Belongs to the adenylosuccinate synthetase family. In terms of assembly, homodimer. Requires Mg(2+) as cofactor.

It is found in the cytoplasm. It localises to the mitochondrion. The enzyme catalyses IMP + L-aspartate + GTP = N(6)-(1,2-dicarboxyethyl)-AMP + GDP + phosphate + 2 H(+). It functions in the pathway purine metabolism; AMP biosynthesis via de novo pathway; AMP from IMP: step 1/2. With respect to regulation, inhibited competitively by AMP and IMP and non-competitively by fructose 1,6-bisphosphate. Functionally, plays an important role in the de novo pathway and in the salvage pathway of purine nucleotide biosynthesis. Catalyzes the first committed step in the biosynthesis of AMP from IMP. The sequence is that of Adenylosuccinate synthetase isozyme 2 A (adss2-a) from Xenopus tropicalis (Western clawed frog).